The chain runs to 613 residues: MHATTQPFRPIQPLSDQLISQIAAGEVVERPSAVVKELLENALDAGATAITVRLEQGGVKRIAITDNGRGITPEQLPLALARHATSKINSLNELENVGTLGFRGEALASIASVAQLTLTSRTADAQHAWEISGVQGSDQKNTVAPSSGAPGTTVDVQDLYFNTPARRKFLKTEQTEFGHCAEVVRRIALSRPDVAFSLSHNGKTVDHWAVNDIAKRSAHILGSEFSGARLPLEETAGPLHLHGFIGLPTASKARGDAQYFYVNGRFVRDKLLMHAVRSAYQDVLHGDRYPSYVISLDLDPALVDVNVHPSKIEVRFRDSRSVHQFVFHAVSRALAQTSATAFGAVPSPTPAPSGALPWLREQQQTTFAPQFQQQYGVAQTTANYGALFNTDGAVTPLGTEPAPAFAAFTNSPAQTMSDDEFPLGFALAQLHGIFILAQNTKGLVLVDMHAAHERILYEQLKNALDDNAMQVQPLLIPITFYADDVEVGTAEDSKETLLSLGFDIAVMSPTTLAIRAVPTLLKNADAQSLARDVLRDVREYGGSRVLVERRNELLGTLACHTAVRANRMLTGPEMNALLRQMEATERADQCNHGRPTWVQLGLSDLDKLFERGR.

It belongs to the DNA mismatch repair MutL/HexB family.

Functionally, this protein is involved in the repair of mismatches in DNA. It is required for dam-dependent methyl-directed DNA mismatch repair. May act as a 'molecular matchmaker', a protein that promotes the formation of a stable complex between two or more DNA-binding proteins in an ATP-dependent manner without itself being part of a final effector complex. The sequence is that of DNA mismatch repair protein MutL from Janthinobacterium sp. (strain Marseille) (Minibacterium massiliensis).